The sequence spans 233 residues: 5'-methylthioadenosine/S-adenosylhomocysteine nucleosidase (233 aa).

The active-site Proton acceptor is E12. Substrate is bound by residues G78, I153, and 174–175; that span reads ME. D198 serves as the catalytic Proton donor.

The protein belongs to the PNP/UDP phosphorylase family. MtnN subfamily.

The catalysed reaction is S-adenosyl-L-homocysteine + H2O = S-(5-deoxy-D-ribos-5-yl)-L-homocysteine + adenine. It carries out the reaction S-methyl-5'-thioadenosine + H2O = 5-(methylsulfanyl)-D-ribose + adenine. It catalyses the reaction 5'-deoxyadenosine + H2O = 5-deoxy-D-ribose + adenine. The protein operates within amino-acid biosynthesis; L-methionine biosynthesis via salvage pathway; S-methyl-5-thio-alpha-D-ribose 1-phosphate from S-methyl-5'-thioadenosine (hydrolase route): step 1/2. Its function is as follows. Catalyzes the irreversible cleavage of the glycosidic bond in both 5'-methylthioadenosine (MTA) and S-adenosylhomocysteine (SAH/AdoHcy) to adenine and the corresponding thioribose, 5'-methylthioribose and S-ribosylhomocysteine, respectively. Also cleaves 5'-deoxyadenosine, a toxic by-product of radical S-adenosylmethionine (SAM) enzymes, into 5-deoxyribose and adenine. The chain is 5'-methylthioadenosine/S-adenosylhomocysteine nucleosidase from Exiguobacterium sp. (strain ATCC BAA-1283 / AT1b).